Consider the following 339-residue polypeptide: Diacylglycerol acyltransferase/mycolyltransferase Ag85A (339 aa).

An N-terminal signal peptide occupies residues methionine 1–alanine 43. Methionine 85–arginine 86 is a binding site for substrate. Positions phenylalanine 101–valine 111 are fibronectin-binding. Cysteine 130 and cysteine 135 are joined by a disulfide. 2 residues coordinate substrate: serine 169 and aspartate 197. Serine 169 (nucleophile) is an active-site residue. Residue glutamate 272 is part of the active site. Substrate-binding positions include phenylalanine 274–threonine 277, lysine 281, and histidine 304–tryptophan 306. Histidine 304 is an active-site residue.

The protein belongs to the mycobacterial A85 antigen family. Homodimer.

It is found in the secreted. The protein resides in the cell wall. The protein localises to the cytoplasm. The enzyme catalyses an acyl-CoA + a 1,2-diacyl-sn-glycerol = a triacyl-sn-glycerol + CoA. It carries out the reaction 2 alpha,alpha'-trehalose 6-mycolate = alpha,alpha'-trehalose 6,6'-bismycolate + alpha,alpha-trehalose. Its function is as follows. The antigen 85 proteins (FbpA, FbpB, FbpC) are responsible for the high affinity of mycobacteria for fibronectin, a large adhesive glycoprotein, which facilitates the attachment of M.tuberculosis to murine alveolar macrophages (AMs). They also help to maintain the integrity of the cell wall by catalyzing the transfer of mycolic acids to cell wall arabinogalactan, and through the synthesis of alpha,alpha-trehalose dimycolate (TDM, cord factor). They catalyze the transfer of a mycoloyl residue from one molecule of alpha,alpha-trehalose monomycolate (TMM) to another TMM, leading to the formation of TDM. FbpA mediates triacylglycerol (TAG) formation with long-chain acyl-CoA as the acyl donor and 1,2-dipalmitoyl-sn-glycerol (1,2-dipalmitin) as the acyl acceptor. It has a preference for C26:0-CoA over C18:1-CoA. This chain is Diacylglycerol acyltransferase/mycolyltransferase Ag85A (fbpA), found in Mycobacterium gordonae.